Reading from the N-terminus, the 227-residue chain is UPF0173 metal-dependent hydrolase SSO0099 (227 aa).

This sequence belongs to the UPF0173 family.

The polypeptide is UPF0173 metal-dependent hydrolase SSO0099 (Saccharolobus solfataricus (strain ATCC 35092 / DSM 1617 / JCM 11322 / P2) (Sulfolobus solfataricus)).